A 273-amino-acid polypeptide reads, in one-letter code: Oxidized low-density lipoprotein receptor 1 (273 aa).

The interval 1–22 (MTFDDLKIQTVKDQPDEKSNGK) is disordered. The Cytoplasmic portion of the chain corresponds to 1-36 (MTFDDLKIQTVKDQPDEKSNGKKAKGLQFLYSPWWC). Residues Cys-36 and Cys-46 are each lipidated (S-palmitoyl cysteine). Residues 37–57 (LAAATLGVLCLGLVVTIMVLG) traverse the membrane as a helical; Signal-anchor for type II membrane protein segment. The segment at 58–150 (MQLSQVSDLL…SAPCPQDWIW (93 aa)) is neck. Topologically, residues 58–273 (MQLSQVSDLL…CQKKANLRAQ (216 aa)) are extracellular. The stretch at 64 to 123 (SDLLTQEQANLTHQKKKLEGQISARQQAEEASQESENELKEMIETLARKLNEKSKEQMEL) forms a coiled coil. N-linked (GlcNAc...) asparagine glycosylation is present at Asn-73. The N-linked (GlcNAc...) (complex) asparagine glycan is linked to Asn-139. 3 disulfides stabilise this stretch: Cys-144-Cys-155, Cys-172-Cys-264, and Cys-243-Cys-256. Positions 151-265 (HGENCYLFSS…CILAAFSICQ (115 aa)) constitute a C-type lectin domain.

In terms of assembly, homodimer; disulfide-linked. May form a hexamer composed of 3 homodimers. Interacts with HSP70. As to quaternary structure, (Microbial infection) Binds to the head and beginning of the coiled stalk of N.meningitidis adhesin A (nadA) variant 3; binding can be abrogated by monoclonal antibodies against the specific regions of NadA. Binding occurs in protein microarrays, in solution and when LOX-1 is expressed on the cell surface. The intrachain disulfide-bonds prevent N-glycosylation at some sites. In terms of processing, N-glycosylated. Expressed at high level in endothelial cells and vascular-rich organs such as placenta, lung, liver and brain, aortic intima, bone marrow, spinal cord and substantia nigra. Also expressed at the surface of dendritic cells. Widely expressed at intermediate and low level.

It is found in the cell membrane. It localises to the membrane raft. The protein localises to the secreted. Functionally, receptor that mediates the recognition, internalization and degradation of oxidatively modified low density lipoprotein (oxLDL) by vascular endothelial cells. OxLDL is a marker of atherosclerosis that induces vascular endothelial cell activation and dysfunction, resulting in pro-inflammatory responses, pro-oxidative conditions and apoptosis. Its association with oxLDL induces the activation of NF-kappa-B through an increased production of intracellular reactive oxygen and a variety of pro-atherogenic cellular responses including a reduction of nitric oxide (NO) release, monocyte adhesion and apoptosis. In addition to binding oxLDL, it acts as a receptor for the HSP70 protein involved in antigen cross-presentation to naive T-cells in dendritic cells, thereby participating in cell-mediated antigen cross-presentation. Also involved in inflammatory process, by acting as a leukocyte-adhesion molecule at the vascular interface in endotoxin-induced inflammation. Also acts as a receptor for advanced glycation end (AGE) products, activated platelets, monocytes, apoptotic cells and both Gram-negative and Gram-positive bacteria. In terms of biological role, (Microbial infection) May serve as a receptor for adhesin A variant 3 (nadA) of N.meningitidis. The polypeptide is Oxidized low-density lipoprotein receptor 1 (OLR1) (Homo sapiens (Human)).